The chain runs to 250 residues: Leucyl/phenylalanyl-tRNA--protein transferase (250 aa).

Residues 1 to 21 (MTPFRRPTVLGTSASAPFPPA) are disordered.

Belongs to the L/F-transferase family.

It localises to the cytoplasm. The enzyme catalyses N-terminal L-lysyl-[protein] + L-leucyl-tRNA(Leu) = N-terminal L-leucyl-L-lysyl-[protein] + tRNA(Leu) + H(+). The catalysed reaction is N-terminal L-arginyl-[protein] + L-leucyl-tRNA(Leu) = N-terminal L-leucyl-L-arginyl-[protein] + tRNA(Leu) + H(+). It carries out the reaction L-phenylalanyl-tRNA(Phe) + an N-terminal L-alpha-aminoacyl-[protein] = an N-terminal L-phenylalanyl-L-alpha-aminoacyl-[protein] + tRNA(Phe). Functionally, functions in the N-end rule pathway of protein degradation where it conjugates Leu, Phe and, less efficiently, Met from aminoacyl-tRNAs to the N-termini of proteins containing an N-terminal arginine or lysine. The protein is Leucyl/phenylalanyl-tRNA--protein transferase of Xanthomonas euvesicatoria pv. vesicatoria (strain 85-10) (Xanthomonas campestris pv. vesicatoria).